The chain runs to 692 residues: Elongation factor G (692 aa).

In terms of domain architecture, tr-type G spans 8-283; sequence NRIRNIGIAA…AVIDYLPAPT (276 aa). Residues 17–24, 81–85, and 135–138 contribute to the GTP site; these read AHIDAGKT, DTPGH, and NKMD.

This sequence belongs to the TRAFAC class translation factor GTPase superfamily. Classic translation factor GTPase family. EF-G/EF-2 subfamily.

It is found in the cytoplasm. Catalyzes the GTP-dependent ribosomal translocation step during translation elongation. During this step, the ribosome changes from the pre-translocational (PRE) to the post-translocational (POST) state as the newly formed A-site-bound peptidyl-tRNA and P-site-bound deacylated tRNA move to the P and E sites, respectively. Catalyzes the coordinated movement of the two tRNA molecules, the mRNA and conformational changes in the ribosome. This chain is Elongation factor G (fusA), found in Helicobacter pylori (strain J99 / ATCC 700824) (Campylobacter pylori J99).